A 155-amino-acid chain; its full sequence is Aspartate carbamoyltransferase regulatory chain (155 aa).

Zn(2+) contacts are provided by cysteine 110, cysteine 115, cysteine 139, and cysteine 142.

Belongs to the PyrI family. As to quaternary structure, contains catalytic and regulatory chains. Requires Zn(2+) as cofactor.

Functionally, involved in allosteric regulation of aspartate carbamoyltransferase. In Yersinia pestis bv. Antiqua (strain Antiqua), this protein is Aspartate carbamoyltransferase regulatory chain.